A 284-amino-acid chain; its full sequence is Pantothenate synthetase (284 aa).

30-37 provides a ligand contact to ATP; that stretch reads MGNLHEGH. Residue His-37 is the Proton donor of the active site. (R)-pantoate is bound at residue Gln-61. Gln-61 serves as a coordination point for beta-alanine. 149 to 152 serves as a coordination point for ATP; the sequence is GEKD. Gln-155 provides a ligand contact to (R)-pantoate. ATP-binding positions include Val-178 and 186-189; that span reads LSSR.

Belongs to the pantothenate synthetase family. Homodimer.

Its subcellular location is the cytoplasm. The enzyme catalyses (R)-pantoate + beta-alanine + ATP = (R)-pantothenate + AMP + diphosphate + H(+). It participates in cofactor biosynthesis; (R)-pantothenate biosynthesis; (R)-pantothenate from (R)-pantoate and beta-alanine: step 1/1. Its function is as follows. Catalyzes the condensation of pantoate with beta-alanine in an ATP-dependent reaction via a pantoyl-adenylate intermediate. The sequence is that of Pantothenate synthetase from Yersinia pseudotuberculosis serotype O:1b (strain IP 31758).